The chain runs to 658 residues: DNA ligase (658 aa).

NAD(+) contacts are provided by residues 31 to 35 (DFEYD), 80 to 81 (SL), and Glu-110. Catalysis depends on Lys-112, which acts as the N6-AMP-lysine intermediate. Positions 133, 167, 279, and 303 each coordinate NAD(+). 4 residues coordinate Zn(2+): Cys-397, Cys-400, Cys-415, and Cys-420. A BRCT domain is found at 584–654 (DTASIYFQKS…KALNIPIINE (71 aa)).

It belongs to the NAD-dependent DNA ligase family. LigA subfamily. Mg(2+) is required as a cofactor. Mn(2+) serves as cofactor.

It carries out the reaction NAD(+) + (deoxyribonucleotide)n-3'-hydroxyl + 5'-phospho-(deoxyribonucleotide)m = (deoxyribonucleotide)n+m + AMP + beta-nicotinamide D-nucleotide.. In terms of biological role, DNA ligase that catalyzes the formation of phosphodiester linkages between 5'-phosphoryl and 3'-hydroxyl groups in double-stranded DNA using NAD as a coenzyme and as the energy source for the reaction. It is essential for DNA replication and repair of damaged DNA. The protein is DNA ligase of Mycoplasma pneumoniae (strain ATCC 29342 / M129 / Subtype 1) (Mycoplasmoides pneumoniae).